The following is a 351-amino-acid chain: Nicotinate-nucleotide--dimethylbenzimidazole phosphoribosyltransferase (351 aa).

The Proton acceptor role is filled by E318.

This sequence belongs to the CobT family.

The catalysed reaction is 5,6-dimethylbenzimidazole + nicotinate beta-D-ribonucleotide = alpha-ribazole 5'-phosphate + nicotinate + H(+). It functions in the pathway nucleoside biosynthesis; alpha-ribazole biosynthesis; alpha-ribazole from 5,6-dimethylbenzimidazole: step 1/2. In terms of biological role, catalyzes the synthesis of alpha-ribazole-5'-phosphate from nicotinate mononucleotide (NAMN) and 5,6-dimethylbenzimidazole (DMB). The polypeptide is Nicotinate-nucleotide--dimethylbenzimidazole phosphoribosyltransferase (Shewanella frigidimarina (strain NCIMB 400)).